A 271-amino-acid polypeptide reads, in one-letter code: Formamidopyrimidine-DNA glycosylase (271 aa).

The active-site Schiff-base intermediate with DNA is Pro2. Catalysis depends on Glu3, which acts as the Proton donor. Lys57 serves as the catalytic Proton donor; for beta-elimination activity. DNA contacts are provided by His90, Arg109, and Lys151. The FPG-type zinc-finger motif lies at 236-270 (HVYGRGGETCTQCGNLLSEIKLGQRATVFCGLCQP). Residue Arg260 is the Proton donor; for delta-elimination activity of the active site.

It belongs to the FPG family. Monomer. Zn(2+) is required as a cofactor.

The enzyme catalyses Hydrolysis of DNA containing ring-opened 7-methylguanine residues, releasing 2,6-diamino-4-hydroxy-5-(N-methyl)formamidopyrimidine.. The catalysed reaction is 2'-deoxyribonucleotide-(2'-deoxyribose 5'-phosphate)-2'-deoxyribonucleotide-DNA = a 3'-end 2'-deoxyribonucleotide-(2,3-dehydro-2,3-deoxyribose 5'-phosphate)-DNA + a 5'-end 5'-phospho-2'-deoxyribonucleoside-DNA + H(+). In terms of biological role, involved in base excision repair of DNA damaged by oxidation or by mutagenic agents. Acts as a DNA glycosylase that recognizes and removes damaged bases. Has a preference for oxidized purines, such as 7,8-dihydro-8-oxoguanine (8-oxoG). Has AP (apurinic/apyrimidinic) lyase activity and introduces nicks in the DNA strand. Cleaves the DNA backbone by beta-delta elimination to generate a single-strand break at the site of the removed base with both 3'- and 5'-phosphates. The protein is Formamidopyrimidine-DNA glycosylase of Shewanella loihica (strain ATCC BAA-1088 / PV-4).